The following is a 331-amino-acid chain: Tetraacyldisaccharide 4'-kinase (331 aa).

57–64 is an ATP binding site; sequence SVGGNGKT.

Belongs to the LpxK family.

It carries out the reaction a lipid A disaccharide + ATP = a lipid IVA + ADP + H(+). Its pathway is glycolipid biosynthesis; lipid IV(A) biosynthesis; lipid IV(A) from (3R)-3-hydroxytetradecanoyl-[acyl-carrier-protein] and UDP-N-acetyl-alpha-D-glucosamine: step 6/6. Transfers the gamma-phosphate of ATP to the 4'-position of a tetraacyldisaccharide 1-phosphate intermediate (termed DS-1-P) to form tetraacyldisaccharide 1,4'-bis-phosphate (lipid IVA). This is Tetraacyldisaccharide 4'-kinase from Histophilus somni (strain 2336) (Haemophilus somnus).